The chain runs to 124 residues: ATP synthase epsilon chain (124 aa).

Belongs to the ATPase epsilon chain family. F-type ATPases have 2 components, CF(1) - the catalytic core - and CF(0) - the membrane proton channel. CF(1) has five subunits: alpha(3), beta(3), gamma(1), delta(1), epsilon(1). CF(0) has three main subunits: a, b and c.

The protein resides in the cell membrane. Produces ATP from ADP in the presence of a proton gradient across the membrane. This Corynebacterium glutamicum (strain ATCC 13032 / DSM 20300 / JCM 1318 / BCRC 11384 / CCUG 27702 / LMG 3730 / NBRC 12168 / NCIMB 10025 / NRRL B-2784 / 534) protein is ATP synthase epsilon chain.